Reading from the N-terminus, the 316-residue chain is 4-hydroxy-3-methylbut-2-enyl diphosphate reductase (316 aa).

C12 contacts [4Fe-4S] cluster. (2E)-4-hydroxy-3-methylbut-2-enyl diphosphate-binding residues include H43 and H81. Dimethylallyl diphosphate-binding residues include H43 and H81. 2 residues coordinate isopentenyl diphosphate: H43 and H81. A [4Fe-4S] cluster-binding site is contributed by C103. H131 provides a ligand contact to (2E)-4-hydroxy-3-methylbut-2-enyl diphosphate. A dimethylallyl diphosphate-binding site is contributed by H131. H131 is a binding site for isopentenyl diphosphate. E133 acts as the Proton donor in catalysis. A (2E)-4-hydroxy-3-methylbut-2-enyl diphosphate-binding site is contributed by T170. C198 serves as a coordination point for [4Fe-4S] cluster. (2E)-4-hydroxy-3-methylbut-2-enyl diphosphate-binding residues include S226, N228, and S271. Dimethylallyl diphosphate contacts are provided by S226, N228, and S271. Isopentenyl diphosphate-binding residues include S226, N228, and S271.

This sequence belongs to the IspH family. It depends on [4Fe-4S] cluster as a cofactor.

The enzyme catalyses isopentenyl diphosphate + 2 oxidized [2Fe-2S]-[ferredoxin] + H2O = (2E)-4-hydroxy-3-methylbut-2-enyl diphosphate + 2 reduced [2Fe-2S]-[ferredoxin] + 2 H(+). It carries out the reaction dimethylallyl diphosphate + 2 oxidized [2Fe-2S]-[ferredoxin] + H2O = (2E)-4-hydroxy-3-methylbut-2-enyl diphosphate + 2 reduced [2Fe-2S]-[ferredoxin] + 2 H(+). It functions in the pathway isoprenoid biosynthesis; dimethylallyl diphosphate biosynthesis; dimethylallyl diphosphate from (2E)-4-hydroxy-3-methylbutenyl diphosphate: step 1/1. It participates in isoprenoid biosynthesis; isopentenyl diphosphate biosynthesis via DXP pathway; isopentenyl diphosphate from 1-deoxy-D-xylulose 5-phosphate: step 6/6. Catalyzes the conversion of 1-hydroxy-2-methyl-2-(E)-butenyl 4-diphosphate (HMBPP) into a mixture of isopentenyl diphosphate (IPP) and dimethylallyl diphosphate (DMAPP). Acts in the terminal step of the DOXP/MEP pathway for isoprenoid precursor biosynthesis. The sequence is that of 4-hydroxy-3-methylbut-2-enyl diphosphate reductase from Geobacillus thermodenitrificans (strain NG80-2).